The chain runs to 316 residues: Ribosomal RNA large subunit methyltransferase F (316 aa).

It belongs to the methyltransferase superfamily. METTL16/RlmF family.

The protein localises to the cytoplasm. The enzyme catalyses adenosine(1618) in 23S rRNA + S-adenosyl-L-methionine = N(6)-methyladenosine(1618) in 23S rRNA + S-adenosyl-L-homocysteine + H(+). In terms of biological role, specifically methylates the adenine in position 1618 of 23S rRNA. This chain is Ribosomal RNA large subunit methyltransferase F, found in Pseudomonas putida (strain W619).